Reading from the N-terminus, the 207-residue chain is Reticulon-1-A (207 aa).

Residues 21–207 (AIDLLYWRDI…AKIPGTKQKE (187 aa)) enclose the Reticulon domain. A run of 2 helical transmembrane segments spans residues 35–55 (IVFGSVLLMLFSLIQFSVVSV) and 139–159 (VLMWLLTYVGALFNGLTLLIM).

As to expression, expressed in the animal hemisphere (presumptive neural ectoderm) of blastula and gastrula stage embryos, and along the anterior neural border, in the panplacodal primordium, and in the dorsolateral side of archenteron roof of late neurula embryos. At the tailbud stage, expression localizes to the central nervous system, including the spinal cord, prosencephalon, mesencephalon and rhombencephalon, as well as the lateral line placode, otic vesicle and pronephros.

The protein resides in the endoplasmic reticulum membrane. The protein localises to the nucleus. Functionally, inhibits amyloid precursor protein processing, probably by blocking BACE1 activity. The polypeptide is Reticulon-1-A (rtn1-a) (Xenopus laevis (African clawed frog)).